Reading from the N-terminus, the 372-residue chain is Cytochrome b (372 aa).

4 helical membrane passes run 25–45, 69–90, 105–125, and 170–190; these read FGSMLLTCLIMQILTGFFLAI, WIMQNLHAIGASMFFICIYIHI, WLSGTTLLITLMATAFFGYVL, and FFALHFILPFAIISLSSIHII. Heme b is bound by residues His75 and His89. Residues His174 and His188 each contribute to the heme b site. His193 provides a ligand contact to a ubiquinone. 4 helical membrane-spanning segments follow: residues 218–238, 280–300, 312–332, and 339–358; these read YKDMLMITIMVTLLFIILSFL, LGGTMALTMSIMILMTTPFTH, LSQTMFWTLIVTFIMITWTAT, and FITISQTTTVFYFSFFIMTP.

It belongs to the cytochrome b family. In terms of assembly, the cytochrome bc1 complex contains 3 respiratory subunits (MT-CYB, CYC1 and UQCRFS1), 2 core proteins (UQCRC1 and UQCRC2) and probably 6 low-molecular weight proteins. The cofactor is heme b.

It localises to the mitochondrion inner membrane. Its function is as follows. Component of the ubiquinol-cytochrome c reductase complex (complex III or cytochrome b-c1 complex) that is part of the mitochondrial respiratory chain. The b-c1 complex mediates electron transfer from ubiquinol to cytochrome c. Contributes to the generation of a proton gradient across the mitochondrial membrane that is then used for ATP synthesis. The sequence is that of Cytochrome b (MT-CYB) from Aspidelaps scutatus (Shield-nose snake).